Consider the following 296-residue polypeptide: Nicotinate dehydrogenase FAD-subunit (296 aa).

An FAD-binding PCMH-type domain is found at 1 to 179 (MKDFEFFAPK…TEVIIDRPDA (179 aa)). Residues 29–36 (IIAGGTDL), Gly101, 110–114 (TIGGN), Asp123, Arg160, Met169, and Lys187 contribute to the FAD site.

As to quaternary structure, heterooctamer of NDHM, NDHL, NDHS and NDHF. Dimer of heterotetramers. FAD serves as cofactor.

The enzyme catalyses nicotinate + NADP(+) + H2O = 6-hydroxynicotinate + NADPH + H(+). It participates in cofactor degradation; nicotinate degradation; 6-hydroxynicotinate from nicotinate: step 1/1. With respect to regulation, reversibly inactivated by selenide and sulfide. Not inhibited by cyanide. Its function is as follows. Catalyzes the hydroxylation of nicotinate to 6-hydroxynicotinate. Also active against 2-pyrazinecarboxylic acid, but inactive against other nicotinate analogs. The chain is Nicotinate dehydrogenase FAD-subunit (ndhF) from Eubacterium barkeri (Clostridium barkeri).